The following is a 151-amino-acid chain: FAD synthase (151 aa).

Residues 21–22, 26–29, and Asp-104 each bind ATP; these read TF and HPGH.

Belongs to the archaeal FAD synthase family. In terms of assembly, homodimer. It depends on a divalent metal cation as a cofactor.

The enzyme catalyses FMN + ATP + H(+) = FAD + diphosphate. The protein operates within cofactor biosynthesis; FAD biosynthesis; FAD from FMN: step 1/1. Its function is as follows. Catalyzes the transfer of the AMP portion of ATP to flavin mononucleotide (FMN) to produce flavin adenine dinucleotide (FAD) coenzyme. This Methanosarcina mazei (strain ATCC BAA-159 / DSM 3647 / Goe1 / Go1 / JCM 11833 / OCM 88) (Methanosarcina frisia) protein is FAD synthase.